Here is an 85-residue protein sequence, read N- to C-terminus: U4-theraphotoxin-Hhn1h (85 aa).

An N-terminal signal peptide occupies residues 1 to 22 (MKVTLIAILTCAAVLVLHTTAA). A propeptide spanning residues 23-48 (EELEAESQLMEVGMPDTELAAVDEER) is cleaved from the precursor. 3 cysteine pairs are disulfide-bonded: Cys-52/Cys-66, Cys-56/Cys-77, and Cys-71/Cys-82.

It belongs to the neurotoxin 12 (Hwtx-2) family. 02 (Hwtx-2) subfamily. Expressed by the venom gland.

The protein resides in the secreted. Its function is as follows. Postsynaptic neurotoxin. The sequence is that of U4-theraphotoxin-Hhn1h from Cyriopagopus hainanus (Chinese bird spider).